Here is a 1241-residue protein sequence, read N- to C-terminus: Intraflagellar transport protein 122 homolog (1241 aa).

4 WD repeats span residues 10 to 50, 51 to 91, 93 to 129, and 131 to 169; these read KAEH…QPLK, GHKD…LKYT, NDAI…VSKH, and SSSK…KVKI. The tract at residues 222 to 246 is disordered; the sequence is VYSSQGSEAEEEEPEEEDDSPRDDN. Positions 229–242 are enriched in acidic residues; it reads EAEEEEPEEEDDSP. WD repeat units follow at residues 278-317, 319-359, and 512-551; these read ALNF…LGTV, EQNS…HGLY, and KQAT…LLFQ.

Component of the IFT complex A (IFT-A) complex. IFT-A complex is divided into a core subcomplex composed of IFT122:IFT140:WDR19 which is associated with TULP3 and a peripheral subcomplex composed of IFT43:WDR35:TTC21B. Interacts with IFT43:WDR35; the interaction connects the 2 IFT-A subcomplexes. Interacts with IFTAP; the interaction associates IFTAP with IFT-A complex. Expressed in many tissues. Predominant expression in testis and pituitary.

It localises to the cell projection. Its subcellular location is the cilium. It is found in the cytoplasm. The protein localises to the cytoskeleton. The protein resides in the cilium basal body. Its function is as follows. As a component of the IFT complex A (IFT-A), a complex required for retrograde ciliary transport and entry into cilia of G protein-coupled receptors (GPCRs), it is required in ciliogenesis and ciliary protein trafficking. Involved in cilia formation during neuronal patterning. Acts as a negative regulator of Shh signaling. Required to recruit TULP3 to primary cilia. This Homo sapiens (Human) protein is Intraflagellar transport protein 122 homolog.